A 338-amino-acid chain; its full sequence is tRNA N6-adenosine threonylcarbamoyltransferase (338 aa).

Positions 114 and 118 each coordinate Fe cation. Residues 136 to 140, Asp169, Gly182, Asp186, and Asn275 each bind substrate; that span reads LVSGG. Asp301 contacts Fe cation.

The protein belongs to the KAE1 / TsaD family. It depends on Fe(2+) as a cofactor.

It localises to the cytoplasm. The catalysed reaction is L-threonylcarbamoyladenylate + adenosine(37) in tRNA = N(6)-L-threonylcarbamoyladenosine(37) in tRNA + AMP + H(+). Functionally, required for the formation of a threonylcarbamoyl group on adenosine at position 37 (t(6)A37) in tRNAs that read codons beginning with adenine. Is involved in the transfer of the threonylcarbamoyl moiety of threonylcarbamoyl-AMP (TC-AMP) to the N6 group of A37, together with TsaE and TsaB. TsaD likely plays a direct catalytic role in this reaction. The polypeptide is tRNA N6-adenosine threonylcarbamoyltransferase (Streptococcus equi subsp. equi (strain 4047)).